Here is a 279-residue protein sequence, read N- to C-terminus: Probable flavonol synthase 4 (279 aa).

The disordered stretch occupies residues 1 to 25 (MEVERDQHKPPLSLQNNKIPSSQNF). Positions 13–25 (SLQNNKIPSSQNF) are enriched in polar residues. In terms of domain architecture, Fe2OG dioxygenase spans 156 to 256 (GAGYLMKINY…RMSSVVHIKP (101 aa)). 2-oxoglutarate is bound at residue 164-166 (NYY). Residues H181, D183, and H237 each contribute to the Fe cation site. 247–249 (RMS) contributes to the 2-oxoglutarate binding site.

This sequence belongs to the iron/ascorbate-dependent oxidoreductase family. Fe(2+) is required as a cofactor.

The catalysed reaction is a (2R,3R)-dihydroflavonol + 2-oxoglutarate + O2 = a flavonol + succinate + CO2 + H2O. It functions in the pathway secondary metabolite biosynthesis; flavonoid biosynthesis. The polypeptide is Probable flavonol synthase 4 (FLS4) (Arabidopsis thaliana (Mouse-ear cress)).